A 354-amino-acid chain; its full sequence is S-adenosylmethionine:tRNA ribosyltransferase-isomerase (354 aa).

This sequence belongs to the QueA family. As to quaternary structure, monomer.

The protein resides in the cytoplasm. It catalyses the reaction 7-aminomethyl-7-carbaguanosine(34) in tRNA + S-adenosyl-L-methionine = epoxyqueuosine(34) in tRNA + adenine + L-methionine + 2 H(+). Its pathway is tRNA modification; tRNA-queuosine biosynthesis. Its function is as follows. Transfers and isomerizes the ribose moiety from AdoMet to the 7-aminomethyl group of 7-deazaguanine (preQ1-tRNA) to give epoxyqueuosine (oQ-tRNA). This is S-adenosylmethionine:tRNA ribosyltransferase-isomerase from Pseudomonas syringae pv. syringae (strain B728a).